A 581-amino-acid chain; its full sequence is Threonine--tRNA ligase (581 aa).

Residues 185 to 478 (DHRKLGKELD…LIEHYGGAFP (294 aa)) are catalytic. Positions 278, 329, and 455 each coordinate Zn(2+).

Belongs to the class-II aminoacyl-tRNA synthetase family. In terms of assembly, homodimer. Zn(2+) is required as a cofactor.

It localises to the cytoplasm. The catalysed reaction is tRNA(Thr) + L-threonine + ATP = L-threonyl-tRNA(Thr) + AMP + diphosphate + H(+). In terms of biological role, catalyzes the attachment of threonine to tRNA(Thr) in a two-step reaction: L-threonine is first activated by ATP to form Thr-AMP and then transferred to the acceptor end of tRNA(Thr). Also edits incorrectly charged L-seryl-tRNA(Thr). This is Threonine--tRNA ligase from Borreliella afzelii (strain PKo) (Borrelia afzelii).